Consider the following 494-residue polypeptide: Sphingosine-1-phosphate transporter MFSD2B (494 aa).

Pro residues predominate over residues 1–12 (MSVPHGPTPAPV). Residues 1-26 (MSVPHGPTPAPVAEPHTQEPGSDKRD) form a disordered region. Transmembrane regions (helical) follow at residues 103–123 (LMPWALGCMPLIALAYFFLWF), 140–160 (CLFQALATFFQVPYTALTMIL), 179–199 (MAGTLMGATVHGLIVSSAHGS), 223–243 (IAAAVVALTYPVCGSLLCLGV), 277–297 (VVSFLFISAAVQVEQSYLVLF), 310–330 (NLVLIILVSAVLSTPLWEWVL), 339–359 (AFGICVMVPFSILLAAVPSAP), 360–380 (VAYVVAFVSGVSIAVSLLLPW), 402–422 (TIFYSSYVFFTKLSGAGALGI), and 449–469 (VLIGAVPTCMILIGLCILLVG). Positions 473-494 (KMPRQDTSSQLSLRRRTSYSLA) are disordered. Residues 485 to 494 (LRRRTSYSLA) show a composition bias toward basic residues.

It belongs to the major facilitator superfamily. Widely expressed with highest expression in spleen, lung and testis. Predominantly expressed in erythroid lineages giving rise to erythrocytes and platelets, but absent in lymphoid lineages.

Its subcellular location is the cell membrane. The enzyme catalyses sphing-4-enine 1-phosphate(in) = sphing-4-enine 1-phosphate(out). It catalyses the reaction sphinganine 1-phosphate(in) = sphinganine 1-phosphate(out). The catalysed reaction is sphinga-4E,14Z-dienine-1-phosphate(in) = sphinga-4E,14Z-dienine-1-phosphate(out). In terms of biological role, lipid transporter that specifically mediates export of sphingosine-1-phosphate in red blood cells and platelets. Sphingosine-1-phosphate is a signaling sphingolipid and its export from red blood cells into in the plasma is required for red blood cell morphology. Sphingosine-1-phosphate export from platelets is required for platelet aggregation and thrombus formation. Mediates the export of different sphingosine-1-phosphate (S1P) species, including S1P(d18:0) (sphinganine 1-phosphate), S1P (d18:1) (sphing-4-enine 1-phosphate) and S1P (d18:2) (sphinga-4E,14Z-dienine-1-phosphate). Release of sphingosine-1-phosphate is facilitated by a proton gradient. In contrast, cations, such as sodium, are not required to drive sphingosine-1-phosphate transport. In addition to export, also able to mediate S1P import. Does not transport lysophosphatidylcholine (LPC). The sequence is that of Sphingosine-1-phosphate transporter MFSD2B from Mus musculus (Mouse).